Consider the following 315-residue polypeptide: Methylglutaconyl-CoA hydratase, mitochondrial (315 aa).

The transit peptide at 1-43 (MAAAAAPGALGALSAGRVRLVAACCARLGSAAWARGTAPRRGY) directs the protein to the mitochondrion. At lysine 76 the chain carries N6-acetyllysine; alternate. Lysine 76 is subject to N6-succinyllysine; alternate. Positions 81 to 95 (KNLLKMLSKAVDALK) are RNA-binding. The residue at position 85 (lysine 85) is an N6-succinyllysine. 2 positions are modified to N6-acetyllysine; alternate: lysine 89 and lysine 120. Residues lysine 89 and lysine 120 each carry the N6-succinyllysine; alternate modification. N6-succinyllysine occurs at positions 124 and 136. 2 positions are modified to N6-acetyllysine; alternate: lysine 180 and lysine 187. N6-succinyllysine; alternate occurs at positions 180 and 187. Lysine 305 bears the N6-succinyllysine mark.

It belongs to the enoyl-CoA hydratase/isomerase family. Homohexamer.

The protein localises to the mitochondrion. It carries out the reaction (3S)-3-hydroxy-3-methylglutaryl-CoA = 3-methyl-(2E)-glutaconyl-CoA + H2O. It catalyses the reaction (3S)-citramalyl-CoA = itaconyl-CoA + H2O. The enzyme catalyses 3-hydroxyisovaleryl-CoA = 3-methylbut-2-enoyl-CoA + H2O. The catalysed reaction is (S)-3-hydroxyglutaryl-CoA = (2E)-glutaconyl-CoA + H2O. Its pathway is amino-acid degradation; L-leucine degradation; (S)-3-hydroxy-3-methylglutaryl-CoA from 3-isovaleryl-CoA: step 3/3. In terms of biological role, catalyzes the fifth step in the leucine degradation pathway, the reversible hydration of 3-methylglutaconyl-CoA (3-MG-CoA) to 3-hydroxy-3-methylglutaryl-CoA (HMG-CoA). Can catalyze the reverse reaction but at a much lower rate in vitro. HMG-CoA is then quickly degraded by another enzyme (such as HMG-CoA lyase) to give acetyl-CoA and acetoacetate. Uses other substrates such as (2E)-glutaconyl-CoA efficiently in vitro, and to a lesser extent 3-methylcrotonyl-CoA (3-methyl-(2E)-butenoyl-CoA), crotonyl-CoA ((2E)-butenoyl-CoA) and 3-hydroxybutanoyl-CoA (the missing carboxylate reduces affinity to the active site). Originally it was identified as an RNA-binding protein as it binds to AU-rich elements (AREs) in vitro. AREs direct rapid RNA degradation and mRNA deadenylation. Might have itaconyl-CoA hydratase activity, converting itaconyl-CoA into citramalyl-CoA in the C5-dicarboxylate catabolism pathway. The C5-dicarboxylate catabolism pathway is required to detoxify itaconate, an antimicrobial metabolite and immunomodulator produced by macrophages during certain infections, that can act as a vitamin B12-poisoning metabolite. The protein is Methylglutaconyl-CoA hydratase, mitochondrial of Rattus norvegicus (Rat).